The following is a 193-amino-acid chain: Peptidyl-tRNA hydrolase (193 aa).

TRNA is bound at residue histidine 17. The active-site Proton acceptor is the histidine 22. The tRNA site is built by phenylalanine 68, asparagine 70, and asparagine 116.

This sequence belongs to the PTH family. As to quaternary structure, monomer.

Its subcellular location is the cytoplasm. The enzyme catalyses an N-acyl-L-alpha-aminoacyl-tRNA + H2O = an N-acyl-L-amino acid + a tRNA + H(+). Its function is as follows. Hydrolyzes ribosome-free peptidyl-tRNAs (with 1 or more amino acids incorporated), which drop off the ribosome during protein synthesis, or as a result of ribosome stalling. Functionally, catalyzes the release of premature peptidyl moieties from peptidyl-tRNA molecules trapped in stalled 50S ribosomal subunits, and thus maintains levels of free tRNAs and 50S ribosomes. The sequence is that of Peptidyl-tRNA hydrolase from Xanthomonas campestris pv. campestris (strain ATCC 33913 / DSM 3586 / NCPPB 528 / LMG 568 / P 25).